The chain runs to 154 residues: Urease accessory protein UreE (154 aa).

This sequence belongs to the UreE family.

Its subcellular location is the cytoplasm. Involved in urease metallocenter assembly. Binds nickel. Probably functions as a nickel donor during metallocenter assembly. The sequence is that of Urease accessory protein UreE from Rhizobium meliloti (strain 1021) (Ensifer meliloti).